Reading from the N-terminus, the 662-residue chain is DNA ligase (662 aa).

Residues Asp34–Asp38, Ser83–Ile84, and Glu113 each bind NAD(+). Lys115 acts as the N6-AMP-lysine intermediate in catalysis. Arg136, Glu172, Lys286, and Lys310 together coordinate NAD(+). Zn(2+) is bound by residues Cys404, Cys407, Cys422, and Cys427. The BRCT domain occupies Arg583–Asn662.

The protein belongs to the NAD-dependent DNA ligase family. LigA subfamily. Requires Mg(2+) as cofactor. It depends on Mn(2+) as a cofactor.

It catalyses the reaction NAD(+) + (deoxyribonucleotide)n-3'-hydroxyl + 5'-phospho-(deoxyribonucleotide)m = (deoxyribonucleotide)n+m + AMP + beta-nicotinamide D-nucleotide.. DNA ligase that catalyzes the formation of phosphodiester linkages between 5'-phosphoryl and 3'-hydroxyl groups in double-stranded DNA using NAD as a coenzyme and as the energy source for the reaction. It is essential for DNA replication and repair of damaged DNA. The polypeptide is DNA ligase (Chlamydia caviae (strain ATCC VR-813 / DSM 19441 / 03DC25 / GPIC) (Chlamydophila caviae)).